A 673-amino-acid polypeptide reads, in one-letter code: DNA ligase (673 aa).

NAD(+) contacts are provided by residues 33 to 37 (DYEYD), 82 to 83 (SL), and Glu-113. The active-site N6-AMP-lysine intermediate is the Lys-115. Arg-136, Glu-170, Lys-285, and Lys-309 together coordinate NAD(+). Cys-403, Cys-406, Cys-421, and Cys-426 together coordinate Zn(2+). The 90-residue stretch at 583–672 (AKSDILKGYT…SHEEVEKILM (90 aa)) folds into the BRCT domain.

This sequence belongs to the NAD-dependent DNA ligase family. LigA subfamily. Mg(2+) serves as cofactor. The cofactor is Mn(2+).

The catalysed reaction is NAD(+) + (deoxyribonucleotide)n-3'-hydroxyl + 5'-phospho-(deoxyribonucleotide)m = (deoxyribonucleotide)n+m + AMP + beta-nicotinamide D-nucleotide.. DNA ligase that catalyzes the formation of phosphodiester linkages between 5'-phosphoryl and 3'-hydroxyl groups in double-stranded DNA using NAD as a coenzyme and as the energy source for the reaction. It is essential for DNA replication and repair of damaged DNA. The sequence is that of DNA ligase from Caldicellulosiruptor saccharolyticus (strain ATCC 43494 / DSM 8903 / Tp8T 6331).